Reading from the N-terminus, the 188-residue chain is Protein YOP1 (188 aa).

Over 1 to 35 (MAEIAGNLQRILQSLDRQFAGNKYLQEFERKTGFP) the chain is Cytoplasmic. The chain crosses the membrane as a helical span at residues 36–55 (KSYAIAGAGVAYLFIIFINV). Topologically, residues 56–57 (GG) are lumenal. The chain crosses the membrane as a helical span at residues 58–78 (VGEILSNFLGFVLPCYYSLHA). The Cytoplasmic portion of the chain corresponds to 79–88 (IKTTTTADDT). Residues 89–105 (ELLTYWIVFAFFSVIEF) traverse the membrane as a helical segment. The Lumenal segment spans residues 106–108 (WSK). A helical transmembrane segment spans residues 109-127 (AILYWVPFYWFFKTIFLIF). Over 128 to 188 (IALPQLGGAS…TGAASHQSSD (61 aa)) the chain is Cytoplasmic. Residues 163 to 188 (ISSKMEQAAKGASARATGAASHQSSD) are disordered. The span at 170–188 (AAKGASARATGAASHQSSD) shows a compositional bias: low complexity.

This sequence belongs to the DP1 family. As to quaternary structure, oligomer.

Its subcellular location is the endoplasmic reticulum membrane. It localises to the golgi apparatus membrane. Functionally, required to generate and maintain the structure of the tubular endoplasmic reticulum network and the vacuole. Induces high curvature in membranes and causes membrane tubule formation. Involved in membrane/vesicle trafficking. This chain is Protein YOP1 (YOP1), found in Eremothecium gossypii (strain ATCC 10895 / CBS 109.51 / FGSC 9923 / NRRL Y-1056) (Yeast).